The following is a 327-amino-acid chain: GMP reductase (327 aa).

Cys-176 functions as the Thioimidate intermediate in the catalytic mechanism. Ile-205 to Val-228 is a binding site for NADP(+).

Belongs to the IMPDH/GMPR family. GuaC type 2 subfamily.

The enzyme catalyses IMP + NH4(+) + NADP(+) = GMP + NADPH + 2 H(+). Functionally, catalyzes the irreversible NADPH-dependent deamination of GMP to IMP. It functions in the conversion of nucleobase, nucleoside and nucleotide derivatives of G to A nucleotides, and in maintaining the intracellular balance of A and G nucleotides. The protein is GMP reductase of Streptococcus pyogenes serotype M1.